The sequence spans 197 residues: Inner membrane-spanning protein YciB (197 aa).

Transmembrane regions (helical) follow at residues 36-56, 64-84, 90-110, 135-155, and 162-182; these read IYSATAMLIISSLVVYGALFL, GQWLTLIACLVFGGLTLTFHS, WKAPVVNWLFALGFAGSHFIG, LAWIAFFLFCGAANLFVAFTF, and FKVFGSLGMTVIFLVAQGVYL.

This sequence belongs to the YciB family.

It is found in the cell inner membrane. Plays a role in cell envelope biogenesis, maintenance of cell envelope integrity and membrane homeostasis. In Pseudomonas putida (strain ATCC 700007 / DSM 6899 / JCM 31910 / BCRC 17059 / LMG 24140 / F1), this protein is Inner membrane-spanning protein YciB.